The following is a 485-amino-acid chain: MSIRYESVENLLTLIKDKKIKPSDVVKDIYDAIEETDPTIKSFLALDKENAIKKAQELDELQAKDQMDGKLFGIPMGIKDNIITNGLETTCASKMLEGFVPIYESTVMEKLHKENAVLIGKLNMDEFAMGGSTETSYFKKTVNPFDHKAVPGGSSGGSAAAVAAGLVPFSLGSDTGGSIRQPAAYCGVVGMKPTYGRVSRFGLVAFASSLDQIGPLTRNVKDNAIVLEAISGADVNDSTSAPVDDVDFTSEIGKDIKGLKVALPKEYLGEGVADDVKEAVQNAVETLKSLGAVVEEVSLPNTKFGIPSYYVIASSEASSNLSRFDGIRYGYHSKEAHSLEELYKMSRSEGFGKEVKRRIFLGTFALSSGYYDAYYKKSQKVRTLIKNDFDKVFENYDVVVGPTAPTTAFNLGEEIDDPLTMYANDLLTTPVNLAGLPGISVPCGQSNGRPIGLQFIGKPFDEKTLYRVAYQYETQYNLHDVYEKL.

Active-site charge relay system residues include K79 and S154. S178 serves as the catalytic Acyl-ester intermediate.

The protein belongs to the amidase family. GatA subfamily. In terms of assembly, heterotrimer of A, B and C subunits.

It catalyses the reaction L-glutamyl-tRNA(Gln) + L-glutamine + ATP + H2O = L-glutaminyl-tRNA(Gln) + L-glutamate + ADP + phosphate + H(+). Functionally, allows the formation of correctly charged Gln-tRNA(Gln) through the transamidation of misacylated Glu-tRNA(Gln) in organisms which lack glutaminyl-tRNA synthetase. The reaction takes place in the presence of glutamine and ATP through an activated gamma-phospho-Glu-tRNA(Gln). This chain is Glutamyl-tRNA(Gln) amidotransferase subunit A, found in Staphylococcus aureus (strain MW2).